The following is a 238-amino-acid chain: Protein A47 (238 aa).

It belongs to the orthopoxvirus A47 protein family.

The protein is Protein A47 of Vaccinia virus (strain Ankara) (VACV).